Consider the following 953-residue polypeptide: Coatomer subunit beta (953 aa).

Threonine 2 carries the N-acetylthreonine modification. HEAT repeat units follow at residues 96-131, 132-168, 240-276, 277-314, 316-353, and 396-433; these read HEMILVCDAYRKDLQHPNEFIRGSTLRFLCKLKEAE, LLEPLMPAIRACLEHRHSYVRRNAVLAIYTIYRNFEN, SERARFIRCIYNLLQSSSPAVKYEAAGTLVTLSSAPT, AIKAAAQCYIDLIIKESDNNVKLIVLDRLVELKEHPAH, RVLQDLVMDILRVLSTPDLEVRKKTLQLALDLVSSRNV, and DMAANVIPVLMEFLSDSNEAAAADVLEFVREAIQRFDN. Lysine 494 is modified (N6-acetyllysine).

Oligomeric complex that consists of at least the alpha, beta, beta', gamma, delta, epsilon and zeta subunits. Interacts with SCYL1. Interacts with CAPN8. Interacts with COPG1. Interacts with ARF1 (myristoylated); this interaction is required for binding of COPB1 to Golgi membranes. Interacts (via trunk domain) with ARF1 (via switch I region); the interaction is direct. Interacts with KCNK2 (via N-terminus); this interaction increases the channel-mediated whole cell currents and promotes plasma membrane expression of KCNK2. Interacts with PRKCE. Interacts with STX17. Interacts with TMEM115. Interacts with TMEM41B. Post-translationally, proteolytically cleaved between Ser-528 and Ser-529 by CAPN8.

Its subcellular location is the cytoplasm. The protein resides in the golgi apparatus membrane. It localises to the cytoplasmic vesicle. It is found in the COPI-coated vesicle membrane. The protein localises to the cell membrane. Its subcellular location is the endoplasmic reticulum-Golgi intermediate compartment. The protein resides in the microsome membrane. In terms of biological role, the coatomer is a cytosolic protein complex that binds to dilysine motifs and reversibly associates with Golgi non-clathrin-coated vesicles, which further mediate biosynthetic protein transport from the ER, via the Golgi up to the trans Golgi network. Coatomer complex is required for budding from Golgi membranes, and is essential for the retrograde Golgi-to-ER transport of dilysine-tagged proteins. In mammals, the coatomer can only be recruited by membranes associated to ADP-ribosylation factors (ARFs), which are small GTP-binding proteins; the complex also influences the Golgi structural integrity, as well as the processing, activity, and endocytic recycling of LDL receptors. Involved in the Golgi disassembly and reassembly processes during cell cycle. Involved in autophagy by playing a role in early endosome function. Plays a role in organellar compartmentalization of secretory compartments including endoplasmic reticulum (ER)-Golgi intermediate compartment (ERGIC), Golgi, trans-Golgi network (TGN) and recycling endosomes, and in biosynthetic transport of CAV1. Plays a functional role in facilitating the transport of kappa-type opioid receptor mRNAs into axons and enhances translation of these proteins in the axonal compartment of dorsal root ganglion (DRG) cells. Required for limiting lipid storage in lipid droplets. Involved in lipid homeostasis by regulating the presence of perilipin family members PLIN2 and PLIN3 at the lipid droplet surface and promoting the association of adipocyte triglyceride lipase (PNPLA2) with the lipid droplet surface to mediate lipolysis. The chain is Coatomer subunit beta (Copb1) from Rattus norvegicus (Rat).